The primary structure comprises 111 residues: uncharacterized protein (111 aa).

The next 2 helical transmembrane spans lie at 27-47 (IIVLFCLLCIIVTLGVIGYKF) and 80-100 (IFTGIYAVLVGVFFISVISAI).

The protein localises to the membrane. This is an uncharacterized protein from Acanthamoeba polyphaga (Amoeba).